The following is a 352-amino-acid chain: Elongation factor Tu, mitochondrial (352 aa).

In terms of domain architecture, tr-type G spans Arg45–His241. The segment at Gly54–Thr61 is G1. 5 residues coordinate GTP: Asp57, Gly59, Lys60, Thr61, and Thr62. Thr61 lines the Mg(2+) pocket. Residues Gly95–Asn99 form a G2 region. The tract at residues Asp116–Gly119 is G3. Positions 171, 174, 209, 210, and 211 each coordinate GTP. The segment at Asn171–Asp174 is G4. Positions Ser209–Leu211 are G5.

Its subcellular location is the mitochondrion. It catalyses the reaction GTP + H2O = GDP + phosphate + H(+). Functionally, GTP hydrolase that promotes the GTP-dependent binding of aminoacyl-tRNA to the A-site of ribosomes during protein biosynthesis. The protein is Elongation factor Tu, mitochondrial of Gallus gallus (Chicken).